The primary structure comprises 428 residues: Enolase (428 aa).

Gln-163 lines the (2R)-2-phosphoglycerate pocket. The active-site Proton donor is the Glu-205. Positions 242, 285, and 312 each coordinate Mg(2+). (2R)-2-phosphoglycerate is bound by residues Lys-337, Arg-366, Ser-367, and Lys-388. Catalysis depends on Lys-337, which acts as the Proton acceptor.

This sequence belongs to the enolase family. Mg(2+) is required as a cofactor.

Its subcellular location is the cytoplasm. The protein resides in the secreted. The protein localises to the cell surface. It catalyses the reaction (2R)-2-phosphoglycerate = phosphoenolpyruvate + H2O. The protein operates within carbohydrate degradation; glycolysis; pyruvate from D-glyceraldehyde 3-phosphate: step 4/5. Catalyzes the reversible conversion of 2-phosphoglycerate (2-PG) into phosphoenolpyruvate (PEP). It is essential for the degradation of carbohydrates via glycolysis. The chain is Enolase from Nitrosomonas eutropha (strain DSM 101675 / C91 / Nm57).